Here is a 512-residue protein sequence, read N- to C-terminus: Glutathione-binding protein GsiB (512 aa).

Residues 1 to 26 form the signal peptide; it reads MARAVHRSGLVALGIATALMASCAFA.

The protein belongs to the bacterial solute-binding protein 5 family. The complex is composed of two ATP-binding proteins (GsiA), two transmembrane proteins (GsiC and GsiD) and a solute-binding protein (GsiB).

The protein localises to the periplasm. Its function is as follows. Part of the ABC transporter complex GsiABCD involved in glutathione import. Binds glutathione. This is Glutathione-binding protein GsiB from Escherichia coli O6:K15:H31 (strain 536 / UPEC).